The primary structure comprises 298 residues: Probable mitochondrial 2-oxodicarboxylate carrier (298 aa).

Transmembrane regions (helical) follow at residues Ile-6–Leu-26, His-62–Leu-81, Ala-105–Phe-125, Ala-159–Phe-179, Leu-203–Ile-223, and Val-267–Phe-287. Solcar repeat units lie at residues Ile-6–Leu-92, Ser-102–Ser-188, and Gly-197–Phe-287.

Belongs to the mitochondrial carrier (TC 2.A.29) family.

The protein resides in the mitochondrion inner membrane. Transports C5-C7 oxodicarboxylates across the inner membranes of mitochondria. The sequence is that of Probable mitochondrial 2-oxodicarboxylate carrier from Schizosaccharomyces pombe (strain 972 / ATCC 24843) (Fission yeast).